Here is a 577-residue protein sequence, read N- to C-terminus: Aspartate--tRNA ligase (577 aa).

Glutamate 171 contacts L-aspartate. Residues 195-198 are aspartate; that stretch reads QLFK. Arginine 217 contacts L-aspartate. ATP contacts are provided by residues 217–219 and glutamine 226; that span reads RDE. An L-aspartate-binding site is contributed by histidine 437. Glutamate 472 is a binding site for ATP. Residue arginine 479 coordinates L-aspartate. Position 524–527 (524–527) interacts with ATP; the sequence is GFDR.

The protein belongs to the class-II aminoacyl-tRNA synthetase family. Type 1 subfamily. Homodimer.

It localises to the cytoplasm. The catalysed reaction is tRNA(Asp) + L-aspartate + ATP = L-aspartyl-tRNA(Asp) + AMP + diphosphate. In terms of biological role, catalyzes the attachment of L-aspartate to tRNA(Asp) in a two-step reaction: L-aspartate is first activated by ATP to form Asp-AMP and then transferred to the acceptor end of tRNA(Asp). The sequence is that of Aspartate--tRNA ligase from Deinococcus deserti (strain DSM 17065 / CIP 109153 / LMG 22923 / VCD115).